The primary structure comprises 499 residues: Glucose-6-phosphate isomerase (499 aa).

Glutamate 352 acts as the Proton donor in catalysis. Active-site residues include histidine 383 and lysine 487.

This sequence belongs to the GPI family.

Its subcellular location is the cytoplasm. The catalysed reaction is alpha-D-glucose 6-phosphate = beta-D-fructose 6-phosphate. It functions in the pathway carbohydrate biosynthesis; gluconeogenesis. The protein operates within carbohydrate degradation; glycolysis; D-glyceraldehyde 3-phosphate and glycerone phosphate from D-glucose: step 2/4. Catalyzes the reversible isomerization of glucose-6-phosphate to fructose-6-phosphate. The sequence is that of Glucose-6-phosphate isomerase from Legionella pneumophila (strain Paris).